A 188-amino-acid polypeptide reads, in one-letter code: Putative manganese efflux pump MntP (188 aa).

Helical transmembrane passes span 3-23, 39-59, 65-85, 110-130, 131-151, and 167-187; these read LFSL…VSIC, AGLY…LLGV, ITDY…VNML, LGFA…FLSV, DIYS…IIGV, and ILGG…HTLF.

Belongs to the MntP (TC 9.B.29) family.

Its subcellular location is the cell inner membrane. Its function is as follows. Probably functions as a manganese efflux pump. This Mannheimia succiniciproducens (strain KCTC 0769BP / MBEL55E) protein is Putative manganese efflux pump MntP.